Consider the following 445-residue polypeptide: ATP-dependent protease ATPase subunit HslU (445 aa).

Residues Ile17, 59–64, Asp254, Glu319, and Arg391 contribute to the ATP site; that span reads GVGKTE.

Belongs to the ClpX chaperone family. HslU subfamily. As to quaternary structure, a double ring-shaped homohexamer of HslV is capped on each side by a ring-shaped HslU homohexamer. The assembly of the HslU/HslV complex is dependent on binding of ATP.

The protein resides in the cytoplasm. Functionally, ATPase subunit of a proteasome-like degradation complex; this subunit has chaperone activity. The binding of ATP and its subsequent hydrolysis by HslU are essential for unfolding of protein substrates subsequently hydrolyzed by HslV. HslU recognizes the N-terminal part of its protein substrates and unfolds these before they are guided to HslV for hydrolysis. The polypeptide is ATP-dependent protease ATPase subunit HslU (Pseudomonas fluorescens (strain SBW25)).